Consider the following 192-residue polypeptide: Thiol-disulfide oxidoreductase ResA (192 aa).

A helical; Signal-anchor for type II membrane protein transmembrane segment spans residues 22-41 (SSILLILVAAVVFAIVSNMK). The region spanning 47–189 (YRVGDAAPDF…LEGYLNDIAP (143 aa)) is the Thioredoxin domain. Cysteine 89 and cysteine 92 are oxidised to a cystine.

The protein belongs to the thioredoxin family. ResA subfamily.

The protein localises to the cell membrane. Its pathway is protein modification; cytochrome c assembly. In terms of biological role, thiol-disulfide oxidoreductase which is required in disulfide reduction during c-type cytochrome synthesis. May accept reducing equivalents from CcdA, leading to breakage of disulfide bonds in apocytochrome c; following this reduction heme can be covalently attached. This Oceanobacillus iheyensis (strain DSM 14371 / CIP 107618 / JCM 11309 / KCTC 3954 / HTE831) protein is Thiol-disulfide oxidoreductase ResA.